We begin with the raw amino-acid sequence, 323 residues long: Mycothiol acetyltransferase (323 aa).

2 consecutive N-acetyltransferase domains span residues 21 to 176 and 173 to 323; these read ELLR…VSLR and VSLR…LTKN. Position 44 (glutamate 44) interacts with 1D-myo-inositol 2-(L-cysteinylamino)-2-deoxy-alpha-D-glucopyranoside. 98-100 contributes to the acetyl-CoA binding site; the sequence is LAV. The 1D-myo-inositol 2-(L-cysteinylamino)-2-deoxy-alpha-D-glucopyranoside site is built by glutamate 200, lysine 240, and glutamate 253. Acetyl-CoA-binding positions include 257-259 and 264-270; these read VGV and QGLGLGK. Tyrosine 291 lines the 1D-myo-inositol 2-(L-cysteinylamino)-2-deoxy-alpha-D-glucopyranoside pocket.

It belongs to the acetyltransferase family. MshD subfamily. In terms of assembly, monomer.

The catalysed reaction is 1D-myo-inositol 2-(L-cysteinylamino)-2-deoxy-alpha-D-glucopyranoside + acetyl-CoA = mycothiol + CoA + H(+). Catalyzes the transfer of acetyl from acetyl-CoA to desacetylmycothiol (Cys-GlcN-Ins) to form mycothiol. In Paenarthrobacter aurescens (strain TC1), this protein is Mycothiol acetyltransferase.